We begin with the raw amino-acid sequence, 467 residues long: Venom prothrombin activator pseutarin-C catalytic subunit (467 aa).

The first 22 residues, Met-1 to Ser-22, serve as a signal peptide directing secretion. A propeptide spanning residues Asn-23–Arg-40 is cleaved from the precursor. A Gla domain is found at Ala-41–Asp-86. Residues Glu-46, Glu-47, Glu-54, Glu-56, Glu-59, Glu-60, Glu-65, Glu-66, Glu-69, and Glu-72 each carry the 4-carboxyglutamate modification. A disulfide bridge connects residues Cys-57 and Cys-62. The EGF-like 1; calcium-binding domain occupies Asp-86–Glu-122. Intrachain disulfides connect Cys-90–Cys-101, Cys-95–Cys-110, Cys-112–Cys-121, Cys-129–Cys-140, Cys-136–Cys-149, Cys-151–Cys-164, Cys-172–Cys-329, Cys-216–Cys-221, Cys-236–Cys-252, Cys-377–Cys-391, and Cys-402–Cys-430. The O-linked (Hex...) serine glycan is linked to Ser-92. An EGF-like 2 domain is found at Cys-129–Cys-164. A propeptide spans Arg-182–Arg-209 (activation peptide). The 245-residue stretch at Ile-210–Arg-454 folds into the Peptidase S1 domain. His-251 (charge relay system) is an active-site residue. An N-linked (GlcNAc...) asparagine glycan is attached at Asn-254. The active-site Charge relay system is Asp-309. Ser-406 serves as the catalytic Charge relay system.

It belongs to the peptidase S1 family. Snake venom subfamily. In terms of assembly, heterodimer of a light and a heavy chains; disulfide-linked. Is associated with pseutarin-C non-catalytic subunit (AC Q7SZN0) in a non-covalent manner. In terms of processing, gamma-carboxyglutamate residues are formed by vitamin K dependent carboxylation. These residues are essential for the binding of calcium. Expressed by the venom gland.

The protein localises to the secreted. The catalysed reaction is Selective cleavage of Arg-|-Thr and then Arg-|-Ile bonds in prothrombin to form thrombin.. Activated by calcium and negatively charged phospholipids. In terms of biological role, snake prothrombin activator that attacks the hemostatic system of prey. This non-catalytic subunit is functionally similar to blood coagulation factor V. It serves as a critical cofactor for the prothrombinase activity of the catalytic subunit, which is similar to the blood coagulation factor X. The complex converts prothrombin to thrombin by sequential cleavage at two positions, Arg-320 followed by Arg-271. Cleavage at Arg-320 produces an active intermediate known as meizothrombin. Meizothrombin is the 'second' substrate for prothrombinase, and it docks in an altered manner to present the second cleavage site (271). Cleavage at Arg-271 releases active thrombin from its pro-fragment. This order of events is reversed if the protease component of prothrombinase is used on its own, suggesting that the 271 site is inherently more accessible to proteolysis. The complex converts prothrombin to thrombin in presence but also in the absence of membrane. The polypeptide is Venom prothrombin activator pseutarin-C catalytic subunit (Pseudonaja textilis (Eastern brown snake)).